The primary structure comprises 106 residues: Putative double-stranded DNA mimic protein VV1228 (106 aa).

It belongs to the putative dsDNA mimic protein family.

Functionally, may act as a double-stranded DNA (dsDNA) mimic. Probably regulates the activity of a dsDNA-binding protein. The chain is Putative double-stranded DNA mimic protein VV1228 from Vibrio vulnificus (strain YJ016).